Reading from the N-terminus, the 294-residue chain is uncharacterized protein (294 aa).

Residues 1–215 (MTTAITPDKK…DQDDDDQKDL (215 aa)) form a disordered region. Composition is skewed to basic residues over residues 27–43 (TKPR…KSKK) and 50–78 (AKKR…KKAP). A compositionally biased stretch (low complexity) spans 79–88 (MKAPSKPAAK). Polar residues predominate over residues 92-102 (QQAQASLQKPI). Residues 118 to 136 (PRPPTPIPPTGVKPEPAPR) show a composition bias toward pro residues. A compositionally biased stretch (low complexity) spans 145 to 160 (SVSSTTPRTSATTGTT).

This is an uncharacterized protein from Caenorhabditis elegans.